The primary structure comprises 1002 residues: Isoleucine--tRNA ligase (1002 aa).

Residues 70–80 carry the 'HIGH' region motif; that stretch reads PYANGNIHIGH. E630 provides a ligand contact to L-isoleucyl-5'-AMP. The 'KMSKS' region signature appears at 671 to 675; it reads KMSKS. K674 provides a ligand contact to ATP.

The protein belongs to the class-I aminoacyl-tRNA synthetase family. IleS type 1 subfamily. In terms of assembly, monomer.

It localises to the cytoplasm. The enzyme catalyses tRNA(Ile) + L-isoleucine + ATP = L-isoleucyl-tRNA(Ile) + AMP + diphosphate. In terms of biological role, catalyzes the attachment of isoleucine to tRNA(Ile). As IleRS can inadvertently accommodate and process structurally similar amino acids such as valine, to avoid such errors it has two additional distinct tRNA(Ile)-dependent editing activities. One activity is designated as 'pretransfer' editing and involves the hydrolysis of activated Val-AMP. The other activity is designated 'posttransfer' editing and involves deacylation of mischarged Val-tRNA(Ile). The polypeptide is Isoleucine--tRNA ligase (Bradyrhizobium diazoefficiens (strain JCM 10833 / BCRC 13528 / IAM 13628 / NBRC 14792 / USDA 110)).